The primary structure comprises 432 residues: Diaminopimelate decarboxylase (432 aa).

Lys66 is subject to N6-(pyridoxal phosphate)lysine. Residues Gly248 and 290–293 contribute to the pyridoxal 5'-phosphate site; that span reads EPGR. Arg293, Arg330, and Tyr334 together coordinate substrate. Cys361 (proton donor) is an active-site residue. Substrate contacts are provided by Glu362 and Tyr390. Residue Tyr390 coordinates pyridoxal 5'-phosphate.

The protein belongs to the Orn/Lys/Arg decarboxylase class-II family. LysA subfamily. Homodimer. The cofactor is pyridoxal 5'-phosphate.

It catalyses the reaction meso-2,6-diaminopimelate + H(+) = L-lysine + CO2. It functions in the pathway amino-acid biosynthesis; L-lysine biosynthesis via DAP pathway; L-lysine from DL-2,6-diaminopimelate: step 1/1. Specifically catalyzes the decarboxylation of meso-diaminopimelate (meso-DAP) to L-lysine. This is Diaminopimelate decarboxylase from Bacillus methanolicus.